The following is a 374-amino-acid chain: uncharacterized protein (374 aa).

The tract at residues 1-46 is disordered; it reads MVNEEEKDLTAEGDSNNTGVSPDSIKNKTLDFYPKEKTTERKTRSR. Basic and acidic residues predominate over residues 25-46; the sequence is IKNKTLDFYPKEKTTERKTRSR. Transmembrane regions (helical) follow at residues 70 to 90, 127 to 147, 153 to 173, 199 to 219, 242 to 262, and 312 to 332; these read YAYIIFAAFLGMASYDYFIAA, WVFYFVFNIPLFIFGVIKIGI, TIVYIGLQNGFHFAFAYIPVI, IWLFVFAAVAGILNGIAYGLV, ISIANYNRIVNYIIIVVMLAI, and YFFGPALFASYLFVVVQAITI.

The protein to M.genitalium MG432 and MG443.

The protein resides in the cell membrane. This is an uncharacterized protein from Spiroplasma citri.